The sequence spans 161 residues: Nucleotide-binding protein Bd0338 (161 aa).

Belongs to the YajQ family.

Nucleotide-binding protein. The protein is Nucleotide-binding protein Bd0338 of Bdellovibrio bacteriovorus (strain ATCC 15356 / DSM 50701 / NCIMB 9529 / HD100).